A 193-amino-acid polypeptide reads, in one-letter code: Superoxide dismutase [Fe] (193 aa).

His27 is a binding site for Fe cation. The residue at position 51 (Lys51) is an N6-acetyllysine. Fe cation contacts are provided by His74, Asp157, and His161.

Belongs to the iron/manganese superoxide dismutase family. As to quaternary structure, homodimer. Fe cation is required as a cofactor.

It catalyses the reaction 2 superoxide + 2 H(+) = H2O2 + O2. Its function is as follows. Destroys superoxide anion radicals which are normally produced within the cells and which are toxic to biological systems. The chain is Superoxide dismutase [Fe] (sodB) from Escherichia coli O157:H7.